Here is a 353-residue protein sequence, read N- to C-terminus: Small ribosomal subunit biogenesis GTPase RsgA (353 aa).

The disordered stretch occupies residues 1–24 (MSKNKLSKGQQRRVKANHQRRLKT). A compositionally biased stretch (basic residues) spans 10–23 (QQRRVKANHQRRLK). The CP-type G domain occupies 104–274 (ASVLTRPDFY…VIDSPGVREF (171 aa)). GTP is bound by residues 160 to 163 (NKID) and 214 to 222 (GQSGVGKSS). Zn(2+)-binding residues include cysteine 298, cysteine 303, histidine 305, and cysteine 311.

Belongs to the TRAFAC class YlqF/YawG GTPase family. RsgA subfamily. Monomer. Associates with 30S ribosomal subunit, binds 16S rRNA. Requires Zn(2+) as cofactor.

The protein localises to the cytoplasm. In terms of biological role, one of several proteins that assist in the late maturation steps of the functional core of the 30S ribosomal subunit. Helps release RbfA from mature subunits. May play a role in the assembly of ribosomal proteins into the subunit. Circularly permuted GTPase that catalyzes slow GTP hydrolysis, GTPase activity is stimulated by the 30S ribosomal subunit. In Klebsiella pneumoniae subsp. pneumoniae (strain ATCC 700721 / MGH 78578), this protein is Small ribosomal subunit biogenesis GTPase RsgA.